A 381-amino-acid chain; its full sequence is ADP,ATP carrier protein 1, mitochondrial (381 aa).

The N-terminal 70 residues, 1-70 (MVDQVQHPTI…ATTASPVFVQ (70 aa)), are a transit peptide targeting the mitochondrion. Solcar repeat units follow at residues 78–171 (TNFA…FKRL), 183–276 (KWFA…VKPV), and 284–370 (DSFF…LQLI). 5 helical membrane-spanning segments follow: residues 80-107 (FALD…VKLL), 148-172 (TANV…KRLF), 181-201 (YWKW…SSLL), 252-273 (FNIS…YDSV), and 287-307 (FASF…SYPI). 2 residues coordinate ADP: Arg-153 and Lys-165. Arg-311 contacts ADP. Positions 311 to 316 (RRRMMM) are important for transport activity. The short motif at 311–316 (RRRMMM) is the Nucleotide carrier signature motif element. Residues 347–367 (AGANILRAVAGAGVLSGYDKL) form a helical membrane-spanning segment.

The protein belongs to the mitochondrial carrier (TC 2.A.29) family. As to quaternary structure, monomer.

It localises to the mitochondrion inner membrane. The enzyme catalyses ADP(in) + ATP(out) = ADP(out) + ATP(in). With respect to regulation, the matrix-open state (m-state) is inhibited by the membrane-permeable bongkrekic acid (BKA). The cytoplasmic-open state (c-state) is inhibited by the membrane-impermeable toxic inhibitor carboxyatractyloside (CATR). ADP:ATP antiporter that mediates import of ADP into the mitochondrial matrix for ATP synthesis, and export of ATP out to fuel the cell. Cycles between the cytoplasmic-open state (c-state) and the matrix-open state (m-state): operates by the alternating access mechanism with a single substrate-binding site intermittently exposed to either the cytosolic (c-state) or matrix (m-state) side of the inner mitochondrial membrane. The sequence is that of ADP,ATP carrier protein 1, mitochondrial (AAC1) from Arabidopsis thaliana (Mouse-ear cress).